The sequence spans 79 residues: Putative membrane protein insertion efficiency factor (79 aa).

The protein belongs to the UPF0161 family.

It localises to the cell inner membrane. Could be involved in insertion of integral membrane proteins into the membrane. This chain is Putative membrane protein insertion efficiency factor, found in Thermotoga neapolitana (strain ATCC 49049 / DSM 4359 / NBRC 107923 / NS-E).